Here is a 199-residue protein sequence, read N- to C-terminus: V-type proton ATPase subunit E (199 aa).

This sequence belongs to the V-ATPase E subunit family.

In terms of biological role, produces ATP from ADP in the presence of a proton gradient across the membrane. This Clostridium botulinum (strain 657 / Type Ba4) protein is V-type proton ATPase subunit E.